The chain runs to 128 residues: MRYRRGASAERELVKLLESKGFAVLRSAGSHKIDLVAGNGKEYLCIEVKSTRSRKLYLPIEDVEKLVEFAGRFGGRPVLAVKFVNVGWRFYGPNRLEHGEKSYKIDLETPFMTLDGLLGKQRTLEGVL.

Glu-10 serves as a coordination point for Mg(2+). The active site involves Ser-30. Mg(2+) contacts are provided by Asp-34 and Glu-47.

It belongs to the Holliday junction resolvase Hjc family. In terms of assembly, homodimer. Mg(2+) serves as cofactor.

It carries out the reaction Endonucleolytic cleavage at a junction such as a reciprocal single-stranded crossover between two homologous DNA duplexes (Holliday junction).. Its function is as follows. A structure-specific endonuclease that resolves Holliday junction (HJ) intermediates during genetic recombination. Cleaves 4-way DNA junctions introducing paired nicks in opposing strands, leaving a 5'-terminal phosphate and a 3'-terminal hydroxyl group that are subsequently ligated to produce recombinant products. This Thermococcus kodakarensis (strain ATCC BAA-918 / JCM 12380 / KOD1) (Pyrococcus kodakaraensis (strain KOD1)) protein is Crossover junction endodeoxyribonuclease Hjc.